We begin with the raw amino-acid sequence, 348 residues long: Probable malate dehydrogenase 2, mitochondrial (348 aa).

Residues 1–9 constitute a mitochondrion transit peptide; the sequence is MNKILTRSF. 31–37 contributes to the NAD(+) binding site; the sequence is GASGQIG. Residues R112 and R118 each coordinate substrate. Residues N125, Q132, and 150–152 each bind NAD(+); that span reads VGN. Residues N152 and R183 each coordinate substrate. Catalysis depends on H208, which acts as the Proton acceptor.

This sequence belongs to the LDH/MDH superfamily. MDH type 2 family. In terms of assembly, homodimer.

The protein localises to the mitochondrion. It catalyses the reaction (S)-malate + NAD(+) = oxaloacetate + NADH + H(+). In terms of biological role, catalyzes the reversible oxidation of malate to oxaloacetate. This is Probable malate dehydrogenase 2, mitochondrial (mdhB) from Dictyostelium discoideum (Social amoeba).